The sequence spans 939 residues: AP-2 complex subunit alpha-2 (939 aa).

A 1,2-diacyl-sn-glycero-3-phospho-(1D-myo-inositol-3,4,5-trisphosphate) is bound by residues 11-12 (RG), Lys-43, Tyr-53, and 57-61 (KYVCK). The interval 612–681 (LAKLKKKKGP…AGPPPSSGGS (70 aa)) is disordered. Positions 646–667 (PASTSAVSTPSPSADLLGLGAA) are enriched in low complexity. Residues 668–677 (PPAPAGPPPS) are compositionally biased toward pro residues.

This sequence belongs to the adaptor complexes large subunit family. In terms of assembly, adaptor protein complex 2 (AP-2) is a heterotetramer composed of two large adaptins (alpha-type subunit AP2A1 or AP2A2 and beta-type subunit AP2B1), a medium adaptin (mu-type subunit AP2M1) and a small adaptin (sigma-type subunit AP2S1). Binds EPN1, EPS15, AMPH, SNAP91 and BIN1. Interacts with HIP1. Interacts with DGKD. Interacts with DENND1A, DENND1B and DENND1C. Interacts with FCHO1 and DAB2. Interacts with ATAT1; this interaction is required for efficient alpha-tubulin acetylation by ATAT1. Interacts with KIAA1107. Together with AP2B1 and AP2M1, it interacts with ADAM10; this interaction facilitates ADAM10 endocytosis from the plasma membrane during long-term potentiation in hippocampal neurons. Interacts with CLN3 (via dileucine motif). Interacts with ABCB11; this interaction regulates cell membrane expression of ABCB11 through its internalization in a clathrin-dependent manner and its subsequent degradation. Interacts with Cacfd1. Interacts with DNAJC6. In terms of tissue distribution, expressed in the brain (at protein level).

The protein resides in the cell membrane. It is found in the membrane. Its subcellular location is the coated pit. In terms of biological role, component of the adaptor protein complex 2 (AP-2). Adaptor protein complexes function in protein transport via transport vesicles in different membrane traffic pathways. Adaptor protein complexes are vesicle coat components and appear to be involved in cargo selection and vesicle formation. AP-2 is involved in clathrin-dependent endocytosis in which cargo proteins are incorporated into vesicles surrounded by clathrin (clathrin-coated vesicles, CCVs) which are destined for fusion with the early endosome. The clathrin lattice serves as a mechanical scaffold but is itself unable to bind directly to membrane components. Clathrin-associated adaptor protein (AP) complexes which can bind directly to both the clathrin lattice and to the lipid and protein components of membranes are considered to be the major clathrin adaptors contributing the CCV formation. AP-2 also serves as a cargo receptor to selectively sort the membrane proteins involved in receptor-mediated endocytosis. AP-2 seems to play a role in the recycling of synaptic vesicle membranes from the presynaptic surface. AP-2 recognizes Y-X-X-[FILMV] (Y-X-X-Phi) and [ED]-X-X-X-L-[LI] endocytosis signal motifs within the cytosolic tails of transmembrane cargo molecules. AP-2 may also play a role in maintaining normal post-endocytic trafficking through the ARF6-regulated, non-clathrin pathway. During long-term potentiation in hippocampal neurons, AP-2 is responsible for the endocytosis of ADAM10. The AP-2 alpha subunit binds polyphosphoinositide-containing lipids, positioning AP-2 on the membrane. The AP-2 alpha subunit acts via its C-terminal appendage domain as a scaffolding platform for endocytic accessory proteins. The AP-2 alpha and AP-2 sigma subunits are thought to contribute to the recognition of the [ED]-X-X-X-L-[LI] motif. The protein is AP-2 complex subunit alpha-2 (AP2A2) of Homo sapiens (Human).